The sequence spans 305 residues: Aspartate carbamoyltransferase catalytic subunit (305 aa).

Positions 53 and 54 each coordinate carbamoyl phosphate. Residue Lys-82 coordinates L-aspartate. Carbamoyl phosphate is bound by residues Arg-103, His-131, and Gln-134. L-aspartate-binding residues include Arg-164 and Arg-226. Carbamoyl phosphate-binding residues include Leu-265 and Pro-266.

The protein belongs to the aspartate/ornithine carbamoyltransferase superfamily. ATCase family. In terms of assembly, heterooligomer of catalytic and regulatory chains.

The enzyme catalyses carbamoyl phosphate + L-aspartate = N-carbamoyl-L-aspartate + phosphate + H(+). Its pathway is pyrimidine metabolism; UMP biosynthesis via de novo pathway; (S)-dihydroorotate from bicarbonate: step 2/3. Its function is as follows. Catalyzes the condensation of carbamoyl phosphate and aspartate to form carbamoyl aspartate and inorganic phosphate, the committed step in the de novo pyrimidine nucleotide biosynthesis pathway. The sequence is that of Aspartate carbamoyltransferase catalytic subunit from Ignicoccus hospitalis (strain KIN4/I / DSM 18386 / JCM 14125).